The chain runs to 308 residues: Ribosomal protein L11 methyltransferase (308 aa).

S-adenosyl-L-methionine contacts are provided by T148, G169, D191, and N239.

Belongs to the methyltransferase superfamily. PrmA family.

It is found in the cytoplasm. The enzyme catalyses L-lysyl-[protein] + 3 S-adenosyl-L-methionine = N(6),N(6),N(6)-trimethyl-L-lysyl-[protein] + 3 S-adenosyl-L-homocysteine + 3 H(+). Methylates ribosomal protein L11. This is Ribosomal protein L11 methyltransferase from Psychrobacter cryohalolentis (strain ATCC BAA-1226 / DSM 17306 / VKM B-2378 / K5).